The chain runs to 908 residues: Translation initiation factor IF-2 (908 aa).

Positions 52–318 (QSHGQEEKRR…RSSQSSQHKF (267 aa)) are disordered. Over residues 65–84 (KSKTTSTARVTGSSGKSKSV) the composition is skewed to polar residues. 6 stretches are compositionally biased toward basic and acidic residues: residues 94 to 108 (FEKP…ELAA), 120 to 138 (AAKD…EERQ), 176 to 185 (IEVKPKDQPK), 193 to 238 (PKVE…EQMR), 270 to 280 (SFEKERREIKR), and 294 to 303 (KNQDEREIKN). Residues 409–578 (TRPPVVTIMG…SLQAELMELE (170 aa)) enclose the tr-type G domain. The G1 stretch occupies residues 418–425 (GHVDHGKT). 418–425 (GHVDHGKT) provides a ligand contact to GTP. A G2 region spans residues 443–447 (GITQH). A G3 region spans residues 464 to 467 (DTPG). Residues 464-468 (DTPGH) and 518-521 (NKMD) each bind GTP. The tract at residues 518–521 (NKMD) is G4. Residues 554 to 556 (SAK) are G5.

Belongs to the TRAFAC class translation factor GTPase superfamily. Classic translation factor GTPase family. IF-2 subfamily.

It localises to the cytoplasm. In terms of biological role, one of the essential components for the initiation of protein synthesis. Protects formylmethionyl-tRNA from spontaneous hydrolysis and promotes its binding to the 30S ribosomal subunits. Also involved in the hydrolysis of GTP during the formation of the 70S ribosomal complex. In Psychrobacter cryohalolentis (strain ATCC BAA-1226 / DSM 17306 / VKM B-2378 / K5), this protein is Translation initiation factor IF-2.